Consider the following 200-residue polypeptide: Chromophore lyase CpcS/CpeS (200 aa).

The protein belongs to the CpcS/CpeS biliprotein lyase family.

Its function is as follows. Covalently attaches a chromophore to Cys residue(s) of phycobiliproteins. The chain is Chromophore lyase CpcS/CpeS from Synechococcus sp. (strain WH8020).